The following is a 416-amino-acid chain: Inositol polyphosphate multikinase (416 aa).

Positions 1-38 are disordered; that stretch reads MATEPPSPLRVEAPGPPEMRTSPAIESTPEGTPQPAGG. Residue alanine 2 is modified to N-acetylalanine. Serine 7 carries the post-translational modification Phosphoserine. Position 75 (lysine 75) interacts with ATP. Position 82 (arginine 82) interacts with substrate. Residues 131 to 133 and aspartate 144 each bind ATP; that span reads EDV. Substrate contacts are provided by residues lysine 146, 160-167, and glutamine 196; that span reads KIQQQVSK. Residues 320-330 carry the Nuclear localization signal motif; that stretch reads RHRKIYTKKHH. Residue aspartate 385 participates in ATP binding. Histidine 388 is a substrate binding site.

Belongs to the inositol phosphokinase (IPK) family. The cofactor is Mg(2+). As to expression, ubiquitous, with the highest expression in skeletal muscle, liver, placenta, lung, peripheral blood leukocytes, kidney, spleen and colon.

It localises to the nucleus. It catalyses the reaction 1D-myo-inositol 1,4,5-trisphosphate + 2 ATP = 1D-myo-inositol 1,3,4,5,6-pentakisphosphate + 2 ADP + 2 H(+). It carries out the reaction 1D-myo-inositol 1,3,4,6-tetrakisphosphate + ATP = 1D-myo-inositol 1,3,4,5,6-pentakisphosphate + ADP + H(+). The enzyme catalyses 1-octadecanoyl-2-(5Z,8Z,11Z,14Z)-eicosatetraenoyl-sn-glycero-3-phospho-1D-myo-inositol 4,5-bisphosphate + ATP = 1-octadecanoyl-2-(5Z,8Z,11Z,14Z-eicosatetraenoyl)-sn-glycero-3-phospho-(1D-myo-inositol 3,4,5-triphosphate) + ADP + H(+). The catalysed reaction is a 1,2-diacyl-sn-glycero-3-phospho-(1D-myo-inositol-4,5-bisphosphate) + ATP = a 1,2-diacyl-sn-glycero-3-phospho-(1D-myo-inositol-3,4,5-trisphosphate) + ADP + H(+). It catalyses the reaction 1D-myo-inositol 1,4,5,6-tetrakisphosphate + ATP = 1D-myo-inositol 1,3,4,5,6-pentakisphosphate + ADP + H(+). It participates in phospholipid metabolism; phosphatidylinositol metabolism. With respect to regulation, inhibited by flavonoids that occupy the ATP-binding pocket. Inhibited by myricetin, quercetin, luteolin, kaempferol, isorhamnetin and diosmetin, and to a lesser degree by rhamnetin and apigenin. In terms of biological role, inositol phosphate kinase with a broad substrate specificity. Phosphorylates inositol 1,4,5-trisphosphate (Ins(1,4,5)P3) first to inositol 1,3,4,5-tetrakisphosphate and then to inositol 1,3,4,5,6-pentakisphosphate (Ins(1,3,4,5,6)P5). Phosphorylates inositol 1,3,4,6-tetrakisphosphate (Ins(1,3,4,6)P4). Phosphorylates inositol 1,4,5,6-tetrakisphosphate (Ins(1,4,5,6)P4). Phosphorylates glycero-3-phospho-1D-myo-inositol 4,5-bisphosphate to glycero-3-phospho-1D-myo-inositol 3,4,5-trisphosphate. Plays an important role in MLKL-mediated necroptosis via its role in the biosynthesis of inositol pentakisphosphate (InsP5) and inositol hexakisphosphate (InsP6). Binding of these highly phosphorylated inositol phosphates to MLKL mediates the release of an N-terminal auto-inhibitory region, leading to activation of the kinase. Essential for activated phospho-MLKL to oligomerize and localize to the cell membrane during necroptosis. Required for normal embryonic development, probably via its role in the biosynthesis of inositol 1,3,4,5,6-pentakisphosphate (Ins(1,3,4,5,6)P5) and inositol hexakisphosphate (InsP6). The chain is Inositol polyphosphate multikinase (IPMK) from Homo sapiens (Human).